Reading from the N-terminus, the 149-residue chain is Protein SprT-like (149 aa).

The region spanning 6-147 (LQKLTEDISL…CGKCRGKIKR (142 aa)) is the SprT-like domain. Residue H67 coordinates Zn(2+). Residue E68 is part of the active site. H71 provides a ligand contact to Zn(2+).

Belongs to the SprT family. Zn(2+) serves as cofactor.

Its subcellular location is the cytoplasm. The polypeptide is Protein SprT-like (Bacillus velezensis (strain DSM 23117 / BGSC 10A6 / LMG 26770 / FZB42) (Bacillus amyloliquefaciens subsp. plantarum)).